The chain runs to 380 residues: Cystathionine gamma-synthase (380 aa).

Lysine 195 bears the N6-(pyridoxal phosphate)lysine mark.

This sequence belongs to the trans-sulfuration enzymes family. Homotetramer. The cofactor is pyridoxal 5'-phosphate.

It is found in the cytoplasm. The catalysed reaction is O-succinyl-L-homoserine + L-cysteine = L,L-cystathionine + succinate + H(+). It participates in amino-acid biosynthesis; L-methionine biosynthesis via de novo pathway; L-cystathionine from O-succinyl-L-homoserine: step 1/1. Its activity is regulated as follows. Four natural products, alpha-lapachone, 9-hydroxy-alpha-lapachone, Paulownin, and Yangambin, show strong inhibitory activities against CGS. All these four inhibitors prevent the binding of OSHS to CGS in a non-competitive fashion. These compounds are specific inhibitors against CGS from H.pylori relative to E.coli since they exhibit very low inhibition activities against CGS from E.coli. In terms of biological role, catalyzes the formation of L-cystathionine from O-succinyl-L-homoserine (OSHS) and L-cysteine, via a gamma-replacement reaction. In the absence of thiol, catalyzes gamma-elimination to form 2-oxobutanoate, succinate and ammonia. The protein is Cystathionine gamma-synthase (metB) of Helicobacter pylori (Campylobacter pylori).